Reading from the N-terminus, the 1162-residue chain is Sialidase (1162 aa).

BNR repeat units follow at residues 23 to 34 (KYSVDDGETWET), 163 to 174 (FYSEDDGKTWKF), and 209 to 220 (YESSDMEKPWVE). Asn342 and Asn394 each carry an N-linked (GlcNAc...) asparagine glycan. The tract at residues 587 to 1123 (HMDSSSDSSA…STPSTPAGSS (537 aa)) is disordered. Positions 589–615 (DSSSDSSAHSTPSTPADSSAHSTPSTP) are enriched in low complexity. Residues 589–1120 (DSSSDSSAHS…SAHSTPSTPA (532 aa)) are 44 X 12 AA tandem repeats, LTR domain. Composition is skewed to polar residues over residues 616–689 (VDSS…TPVD) and 699–1123 (PADS…AGSS). N-linked (GlcNAc...) asparagine glycosylation occurs at Asn1125.

This sequence belongs to the glycosyl hydrolase 33 family.

The protein localises to the cell membrane. It carries out the reaction Hydrolysis of alpha-(2-&gt;3)-, alpha-(2-&gt;6)-, alpha-(2-&gt;8)- glycosidic linkages of terminal sialic acid residues in oligosaccharides, glycoproteins, glycolipids, colominic acid and synthetic substrates.. In terms of biological role, developmentally regulated neuraminidase implicated in parasite invasion of cells. In Trypanosoma cruzi, this protein is Sialidase (TCNA).